Consider the following 113-residue polypeptide: Ig kappa chain V-II region 26-10 (113 aa).

A framework-1 region spans residues aspartate 1–cysteine 23. An intrachain disulfide couples cysteine 23 to cysteine 93. The tract at residues arginine 24–asparagine 39 is complementarity-determining-1. A framework-2 region spans residues tryptophan 40 to tyrosine 54. Positions lysine 55 to serine 61 are complementarity-determining-2. A framework-3 region spans residues glycine 62–cysteine 93. The complementarity-determining-3 stretch occupies residues serine 94–threonine 102. The interval phenylalanine 103–lysine 112 is framework-4.

The sequence is that of Ig kappa chain V-II region 26-10 from Mus musculus (Mouse).